Reading from the N-terminus, the 796-residue chain is MDLLAASVESTLKNLQDKRNFLSEQREHYIDIRSRLVRFINDNDDGEEEGEGQGMVFGDIIISTSKIYLSLGYEYYVEKTKEEAITFVDDKLKLMEDAIEQFNLKIEEAKKTLDNLNHMEDGNGIEEDEANNDEDFLPSMEIREELDDEGNVISSSVTPTTKQPSQSNSKKEQTPAVGPKEKGLAKEKKSKSFEENLKGKLLKRNDEVKKKVQPSKVDTENVYTFADLVQQMDQQDELEDGYIETDEINYDYDAFENSNFKVNDNYEEDDEDEDEEEYLNHSIIPGFEAQSSFLQQIQRLRAQKQSQDHEREEGDVNKSLKPILKKSSFAENSDKKQKKKQVGFASSLEIHEVENLKEENKRQMQSFAVPMYETQESTGIANKMTSDEFDGDLFAKMLGVQEADEVHEKYKEELINQERLEGEASRSNRRTRVSRFRKDRASKKENTLSTFKQETTRSVENEVVEKEPVVGDIIEKEPVVGDVIEKEPVVGDVIEKEPAVTDIVEREPAVNDIVERKPVVGDIIEKEPTINDIVEKEPEINSKSEFETPFKKKKLKSLQKPRSSKSMKKKFDPKILENISDDDYDDDDDGNKKLLSNKSKNNTDEQDKFPSKIQEVSRSMAKTGATVGSEPVRITNVDYHALGGNLDDMVKAYSLGLYDDDLEEDPGTIVEKLEDFKEYNKQVELLRDEIRDFQLENKPVTMEEEENDGNVMNDIIEHEFPESYTNDEDEVALHPGRLQEEVAIEYRRLKEATASKWQSSSPAAHTEGELEPIDKFGNPVKTSRFRSQRLHMDSKP.

The stretch at 81–121 forms a coiled coil; sequence KEEAITFVDDKLKLMEDAIEQFNLKIEEAKKTLDNLNHMED. A compositionally biased stretch (polar residues) spans 152-168; it reads VISSSVTPTTKQPSQSN. 5 disordered regions span residues 152–197, 300–344, 421–458, 535–624, and 752–796; these read VISS…EENL, LRAQ…QVGF, EGEA…TTRS, EKEP…AKTG, and ATAS…DSKP. Composition is skewed to basic and acidic residues over residues 169–197 and 306–318; these read SKKE…EENL and SQDH…DVNK. The segment covering 427–441 has biased composition (basic residues); sequence SNRRTRVSRFRKDRA. Residues 535-550 show a composition bias toward basic and acidic residues; it reads EKEPEINSKSEFETPF. The span at 551 to 568 shows a compositional bias: basic residues; sequence KKKKLKSLQKPRSSKSMK. A compositionally biased stretch (acidic residues) spans 579–589; sequence ISDDDYDDDDD. Position 580 is a phosphoserine (Ser-580). The span at 601–610 shows a compositional bias: basic and acidic residues; the sequence is NNTDEQDKFP.

This sequence belongs to the prefoldin subunit alpha family.

It is found in the cytoplasm. In terms of biological role, involved in gene expression controlled by TOR kinase and nutrient signaling. May also be involved in positioning the proximal bud pole signal. The polypeptide is Bud site selection protein 27 (BUD27) (Saccharomyces cerevisiae (strain ATCC 204508 / S288c) (Baker's yeast)).